Here is a 124-residue protein sequence, read N- to C-terminus: Small ribosomal subunit protein uS12 (124 aa).

The interval 1 to 25 (MATINQLVRKPRQATTYKSASPALD) is disordered. Asp89 is subject to 3-methylthioaspartic acid.

It belongs to the universal ribosomal protein uS12 family. In terms of assembly, part of the 30S ribosomal subunit. Contacts proteins S8 and S17. May interact with IF1 in the 30S initiation complex.

In terms of biological role, with S4 and S5 plays an important role in translational accuracy. Interacts with and stabilizes bases of the 16S rRNA that are involved in tRNA selection in the A site and with the mRNA backbone. Located at the interface of the 30S and 50S subunits, it traverses the body of the 30S subunit contacting proteins on the other side and probably holding the rRNA structure together. The combined cluster of proteins S8, S12 and S17 appears to hold together the shoulder and platform of the 30S subunit. In Stenotrophomonas maltophilia (strain R551-3), this protein is Small ribosomal subunit protein uS12.